The primary structure comprises 502 residues: Glutamate decarboxylase 1 (502 aa).

The residue at position 8 (S8) is a Phosphoserine. At K277 the chain carries N6-(pyridoxal phosphate)lysine. The tract at residues 469-502 (LMVTVKKSDIDKQRDIITGWKKFVADRKKTSGIC) is calmodulin-binding.

The protein belongs to the group II decarboxylase family. As to quaternary structure, homohexamer. Interacts with calmodulin with a 1:3 stoichiometry. The cofactor is pyridoxal 5'-phosphate. Expressed in roots. Detected at low levels in shoots of young seedlings. Not detected in the root tips or in the central vascular bundle in the elongating region of mature roots.

It catalyses the reaction L-glutamate + H(+) = 4-aminobutanoate + CO2. With respect to regulation, up-regulated by calmodulin binding at physiological pH. Functionally, catalyzes the conversion of glutamate to 4-aminobutanoate (GABA). The calmodulin-binding is calcium-dependent and it is proposed to directly or indirectly form a calcium regulated control of GABA biosynthesis. The protein is Glutamate decarboxylase 1 (GAD1) of Arabidopsis thaliana (Mouse-ear cress).